Consider the following 138-residue polypeptide: Thyrotropin subunit beta (138 aa).

A signal peptide spans 1-20; the sequence is MNAVVLFSVLFALACGQVSS. 6 disulfide bridges follow: Cys22–Cys72, Cys36–Cys87, Cys39–Cys125, Cys47–Cys103, Cys51–Cys105, and Cys108–Cys115. Asn43 is a glycosylation site (N-linked (GlcNAc...) asparagine). A propeptide spanning residues 133-138 is cleaved from the precursor; that stretch reads LGGFSG.

This sequence belongs to the glycoprotein hormones subunit beta family. Heterodimer of a common alpha chain and a unique beta chain which confers biological specificity to thyrotropin, lutropin, follitropin and gonadotropin.

It is found in the secreted. Functionally, indispensable for the control of thyroid structure and metabolism. This is Thyrotropin subunit beta (Tshb) from Rattus norvegicus (Rat).